The sequence spans 306 residues: Homoserine O-acetyltransferase (306 aa).

Catalysis depends on Cys142, which acts as the Acyl-thioester intermediate. The substrate site is built by Lys163 and Ser192. His235 (proton acceptor) is an active-site residue. Glu237 is a catalytic residue. Residue Arg249 coordinates substrate.

Belongs to the MetA family.

It localises to the cytoplasm. The enzyme catalyses L-homoserine + acetyl-CoA = O-acetyl-L-homoserine + CoA. It participates in amino-acid biosynthesis; L-methionine biosynthesis via de novo pathway; O-acetyl-L-homoserine from L-homoserine: step 1/1. In terms of biological role, transfers an acetyl group from acetyl-CoA to L-homoserine, forming acetyl-L-homoserine. This is Homoserine O-acetyltransferase from Brevibacillus brevis (strain 47 / JCM 6285 / NBRC 100599).